The primary structure comprises 466 residues: 3-isopropylmalate dehydratase large subunit (466 aa).

[4Fe-4S] cluster is bound by residues Cys347, Cys407, and Cys410.

Belongs to the aconitase/IPM isomerase family. LeuC type 1 subfamily. Heterodimer of LeuC and LeuD. [4Fe-4S] cluster is required as a cofactor.

It carries out the reaction (2R,3S)-3-isopropylmalate = (2S)-2-isopropylmalate. Its pathway is amino-acid biosynthesis; L-leucine biosynthesis; L-leucine from 3-methyl-2-oxobutanoate: step 2/4. Functionally, catalyzes the isomerization between 2-isopropylmalate and 3-isopropylmalate, via the formation of 2-isopropylmaleate. The chain is 3-isopropylmalate dehydratase large subunit from Shewanella sediminis (strain HAW-EB3).